Here is a 607-residue protein sequence, read N- to C-terminus: MPLLEPSATAYGTFGDMRPDTEDEGERLLTDGYVSDDDGSAVTSVDSVQEGVRKIEAINITWTTRSLVIAYISIFLMAFCTSLEGQTIMSLSAYATSAFSKHSLISTVLVVQNVVNAVIKPPMAKIADVFGRFEAFCVSILIYVLGYIQMAASTNVQTYASAQIFYAAGSTGLQILQQVFIADSSSLLNRALLALLPELPFLVTVWIGPTIADVVLENSSWRWGYGMWSIILPASFLPLALSLLLNQRKAKRLNLIKERPHHRRGFVAAVRRTWYDLDIFGLALLSAAVTLILVPLTLAANTKNGWKSNSIVAMIVIGVVCLILLPFWETSKKLAPKPLLSLHLLKQRTALAGCCLAFFYFMAFYFSVQPYLYSYLQVVQGYDVATAGRVTQTFAFTSTIAAFGVSILIKYTRRYRVYVTLGCVIYMTGLLLMLLYRKEGSSPLQVLGTQVIVGMGGGLLNVPVQLGVQASASHQEVAAATAMFLTSMEMGGAVGAAISGAVWTHNIPRKLNLYLPDEYKSEAGAIFGKLTKALSYEMGTPVRSAINRSYQETMNKLLVLALLATLPLIPLSLLMSNYKLDKMSESSDHDDASPRNGLGPGERAKRT.

A run of 12 helical transmembrane segments spans residues 67–89 (LVIA…QTIM), 129–148 (VFGR…LGYI), 186–208 (SLLN…VWIG), 223–245 (WGYG…SLLL), 279–301 (IFGL…LAAN), 311–328 (IVAM…LPFW), 349–368 (TALA…YFSV), 388–410 (GRVT…ILIK), 417–436 (VYVT…MLLY), 446–468 (VLGT…QLGV), 481–503 (TAMF…GAVW), and 557–574 (LLVL…LSLL). Residues 584–593 (SESSDHDDAS) are compositionally biased toward basic and acidic residues. The tract at residues 584–607 (SESSDHDDASPRNGLGPGERAKRT) is disordered.

It belongs to the major facilitator superfamily.

The protein resides in the membrane. The protein is Siderophore iron transporter mirC (mirC) of Emericella nidulans (strain FGSC A4 / ATCC 38163 / CBS 112.46 / NRRL 194 / M139) (Aspergillus nidulans).